Consider the following 132-residue polypeptide: Protein NrdI (132 aa).

This sequence belongs to the NrdI family.

Its function is as follows. Probably involved in ribonucleotide reductase function. This chain is Protein NrdI, found in Staphylococcus epidermidis (strain ATCC 35984 / DSM 28319 / BCRC 17069 / CCUG 31568 / BM 3577 / RP62A).